We begin with the raw amino-acid sequence, 485 residues long: Probable cobyric acid synthase (485 aa).

One can recognise a GATase cobBQ-type domain in the interval 250-435; sequence EIEVAVIRLP…LHGLFDNRNI (186 aa). Catalysis depends on Cys-328, which acts as the Nucleophile. Residue His-427 is part of the active site.

It belongs to the CobB/CobQ family. CobQ subfamily.

The protein operates within cofactor biosynthesis; adenosylcobalamin biosynthesis. Catalyzes amidations at positions B, D, E, and G on adenosylcobyrinic A,C-diamide. NH(2) groups are provided by glutamine, and one molecule of ATP is hydrogenolyzed for each amidation. This chain is Probable cobyric acid synthase, found in Methanosarcina mazei (strain ATCC BAA-159 / DSM 3647 / Goe1 / Go1 / JCM 11833 / OCM 88) (Methanosarcina frisia).